The following is a 314-amino-acid chain: Acetaldehyde dehydrogenase (314 aa).

15–18 is a binding site for NAD(+); sequence SGNI. C133 (acyl-thioester intermediate) is an active-site residue. NAD(+) is bound by residues 164–172 and N292; that span reads SAGPGTRAN.

This sequence belongs to the acetaldehyde dehydrogenase family.

It catalyses the reaction acetaldehyde + NAD(+) + CoA = acetyl-CoA + NADH + H(+). In Paraburkholderia phytofirmans (strain DSM 17436 / LMG 22146 / PsJN) (Burkholderia phytofirmans), this protein is Acetaldehyde dehydrogenase.